A 324-amino-acid polypeptide reads, in one-letter code: Beta-ketoacyl-[acyl-carrier-protein] synthase III (324 aa).

Residues Cys112 and His249 contribute to the active site. Positions 250–254 (QANDR) are ACP-binding. Asn279 is a catalytic residue.

This sequence belongs to the thiolase-like superfamily. FabH family. In terms of assembly, homodimer.

It localises to the cytoplasm. It carries out the reaction malonyl-[ACP] + acetyl-CoA + H(+) = 3-oxobutanoyl-[ACP] + CO2 + CoA. Its pathway is lipid metabolism; fatty acid biosynthesis. Its function is as follows. Catalyzes the condensation reaction of fatty acid synthesis by the addition to an acyl acceptor of two carbons from malonyl-ACP. Catalyzes the first condensation reaction which initiates fatty acid synthesis and may therefore play a role in governing the total rate of fatty acid production. Possesses both acetoacetyl-ACP synthase and acetyl transacylase activities. Its substrate specificity determines the biosynthesis of branched-chain and/or straight-chain of fatty acids. This is Beta-ketoacyl-[acyl-carrier-protein] synthase III from Streptococcus pneumoniae serotype 2 (strain D39 / NCTC 7466).